The primary structure comprises 332 residues: Putative pumilio homolog 20 (332 aa).

The region spanning 1–332 (MAHQLRFAAA…NIASILNSIR (332 aa)) is the PUM-HD domain. Pumilio repeat units lie at residues 89-124 (SDPD…FAAA) and 125-159 (ILRR…AMYE). Residues 160–191 (HILHYASHIARDKHGNLALNDIITDAYRNKLF) form a Pumilio 3; degenerate repeat. 3 Pumilio repeats span residues 192–228 (DVIA…NIVV), 229–266 (SLRG…ELME), and 267–303 (CEGD…DLFW).

Its subcellular location is the cytoplasm. Sequence-specific RNA-binding protein that regulates translation and mRNA stability by binding the 3'-UTR of target mRNAs. The polypeptide is Putative pumilio homolog 20 (APUM20) (Arabidopsis thaliana (Mouse-ear cress)).